The chain runs to 266 residues: Small ribosomal subunit protein mS42 (266 aa).

Belongs to the mitochondrion-specific ribosomal protein mS42 family. In terms of assembly, component of the mitochondrial small ribosomal subunit (mt-SSU). Mature yeast 74S mitochondrial ribosomes consist of a small (37S) and a large (54S) subunit. The 37S small subunit contains a 15S ribosomal RNA (15S mt-rRNA) and 34 different proteins. The 54S large subunit contains a 21S rRNA (21S mt-rRNA) and 46 different proteins. mS42 forms a heterodimer with mS43, building a large protuberance adjacent to the mRNA channel exit in the mt-SSU body.

Its subcellular location is the mitochondrion. Component of the mitochondrial ribosome (mitoribosome), a dedicated translation machinery responsible for the synthesis of mitochondrial genome-encoded proteins, including at least some of the essential transmembrane subunits of the mitochondrial respiratory chain. The mitoribosomes are attached to the mitochondrial inner membrane and translation products are cotranslationally integrated into the membrane. This is Small ribosomal subunit protein mS42 (RSM26) from Saccharomyces cerevisiae (strain ATCC 204508 / S288c) (Baker's yeast).